A 199-amino-acid chain; its full sequence is Recombination protein RecR (199 aa).

The segment at 58–73 (CKTCGNIDTQSPCTVC) adopts a C4-type zinc-finger fold. The 96-residue stretch at 81–176 (AMIVVVADVA…KVTRLAHGVP (96 aa)) folds into the Toprim domain.

Belongs to the RecR family.

May play a role in DNA repair. It seems to be involved in an RecBC-independent recombinational process of DNA repair. It may act with RecF and RecO. This Bradyrhizobium sp. (strain ORS 278) protein is Recombination protein RecR.